A 151-amino-acid chain; its full sequence is Deoxyuridine 5'-triphosphate nucleotidohydrolase (151 aa).

Residues 70–72 (RSG), Asn83, 87–89 (LID), and Met97 contribute to the substrate site.

The protein belongs to the dUTPase family. Requires Mg(2+) as cofactor.

The catalysed reaction is dUTP + H2O = dUMP + diphosphate + H(+). Its pathway is pyrimidine metabolism; dUMP biosynthesis; dUMP from dCTP (dUTP route): step 2/2. Functionally, this enzyme is involved in nucleotide metabolism: it produces dUMP, the immediate precursor of thymidine nucleotides and it decreases the intracellular concentration of dUTP so that uracil cannot be incorporated into DNA. The polypeptide is Deoxyuridine 5'-triphosphate nucleotidohydrolase (Pseudomonas putida (strain ATCC 700007 / DSM 6899 / JCM 31910 / BCRC 17059 / LMG 24140 / F1)).